Consider the following 74-residue polypeptide: Serine rich endogenous peptide 16 (74 aa).

The N-terminal stretch at 1–31 (MATKISHLVSLLLSLLLLLLFISSQVGFTEA) is a signal peptide. The disordered stretch occupies residues 29 to 74 (TEAKRDERKKMSSPPIPSPLIPSPPIPPPPPRFYVPPSKSRRGKGP). The segment covering 42 to 62 (PPIPSPLIPSPPIPPPPPRFY) has biased composition (pro residues). An SCOOP motif motif is present at residues 60–74 (RFYVPPSKSRRGKGP). The short motif at 66–68 (SKS) is the SxS motif essential for MIK2 binding element.

It belongs to the serine rich endogenous peptide (SCOOP) phytocytokine family. In terms of assembly, interacts with MIK2 (via extracellular leucine-rich repeat domain); this interaction triggers the formation of complex between MIK2 and the BAK1/SERK3 and SERK4 coreceptors, and subsequent BAK1 activation by phosphorylation.

It localises to the cell membrane. The protein localises to the secreted. It is found in the extracellular space. The protein resides in the apoplast. Functionally, brassicaceae-specific phytocytokine (plant endogenous peptide released into the apoplast) perceived by MIK2 in a BAK1/SERK3 and SERK4 coreceptors-dependent manner, that modulates various physiological and antimicrobial processes including growth prevention and reactive oxygen species (ROS) response regulation. The sequence is that of Serine rich endogenous peptide 16 from Arabidopsis thaliana (Mouse-ear cress).